Consider the following 340-residue polypeptide: UDP-3-O-acylglucosamine N-acyltransferase (340 aa).

The active-site Proton acceptor is the histidine 238.

Belongs to the transferase hexapeptide repeat family. LpxD subfamily. In terms of assembly, homotrimer.

It catalyses the reaction a UDP-3-O-[(3R)-3-hydroxyacyl]-alpha-D-glucosamine + a (3R)-hydroxyacyl-[ACP] = a UDP-2-N,3-O-bis[(3R)-3-hydroxyacyl]-alpha-D-glucosamine + holo-[ACP] + H(+). The protein operates within bacterial outer membrane biogenesis; LPS lipid A biosynthesis. Catalyzes the N-acylation of UDP-3-O-acylglucosamine using 3-hydroxyacyl-ACP as the acyl donor. Is involved in the biosynthesis of lipid A, a phosphorylated glycolipid that anchors the lipopolysaccharide to the outer membrane of the cell. This Shewanella frigidimarina (strain NCIMB 400) protein is UDP-3-O-acylglucosamine N-acyltransferase.